Here is a 325-residue protein sequence, read N- to C-terminus: Flavin-dependent thymidylate synthase (325 aa).

Residues 12–267 (ISVRLLEYTG…PRLFRWAGPS (256 aa)) form the ThyX domain. Residues Ser65, 89–91 (RHR), and Gln97 each bind FAD. Residues 86–89 (QLVR) and 97–101 (QLSHR) each bind dUMP. The short motif at 89 to 99 (RHRVASYTQLS) is the ThyX motif element. An insert region spans residues 110 to 159 (AALKACESIGLDCPSKPAETEGGRKAAYRLYSQALERAARDFGASERFAI). A dUMP-binding site is contributed by Arg205. 221–223 (NAR) provides a ligand contact to FAD. DUMP is bound at residue Arg233. The active-site Involved in ionization of N3 of dUMP, leading to its activation is Arg233.

The protein belongs to the thymidylate synthase ThyX family. Homotetramer. The cofactor is FAD.

It catalyses the reaction dUMP + (6R)-5,10-methylene-5,6,7,8-tetrahydrofolate + NADPH + H(+) = dTMP + (6S)-5,6,7,8-tetrahydrofolate + NADP(+). The protein operates within pyrimidine metabolism; dTTP biosynthesis. Its function is as follows. Catalyzes the reductive methylation of 2'-deoxyuridine-5'-monophosphate (dUMP) to 2'-deoxythymidine-5'-monophosphate (dTMP) while utilizing 5,10-methylenetetrahydrofolate (mTHF) as the methyl donor, and NADPH and FADH(2) as the reductant. In Aeropyrum pernix (strain ATCC 700893 / DSM 11879 / JCM 9820 / NBRC 100138 / K1), this protein is Flavin-dependent thymidylate synthase.